A 116-amino-acid polypeptide reads, in one-letter code: UPF0482 protein ECA2253 (116 aa).

An N-terminal signal peptide occupies residues 1 to 31 (MNHYSFSSLIRALIPLSLVIVSAVWQPAALA).

This sequence belongs to the UPF0482 family.

The chain is UPF0482 protein ECA2253 from Pectobacterium atrosepticum (strain SCRI 1043 / ATCC BAA-672) (Erwinia carotovora subsp. atroseptica).